The sequence spans 125 residues: Small ribosomal subunit protein uS12m (125 aa).

The interval 1 to 24 is disordered; that stretch reads MPTSNQSIRHGREKKRRTDRTRAL. The segment covering 9-19 has biased composition (basic residues); that stretch reads RHGREKKRRTD.

It belongs to the universal ribosomal protein uS12 family.

It localises to the mitochondrion. In terms of biological role, protein S12 is involved in the translation initiation step. This Pinus sylvestris (Scotch pine) protein is Small ribosomal subunit protein uS12m (RPS12).